A 132-amino-acid chain; its full sequence is Large ribosomal subunit protein uL14 (132 aa).

It belongs to the universal ribosomal protein uL14 family. In terms of assembly, part of the 50S ribosomal subunit. Forms a cluster with proteins L3 and L24e, part of which may contact the 16S rRNA in 2 intersubunit bridges.

Its function is as follows. Binds to 23S rRNA. Forms part of two intersubunit bridges in the 70S ribosome. The protein is Large ribosomal subunit protein uL14 of Halorubrum lacusprofundi (strain ATCC 49239 / DSM 5036 / JCM 8891 / ACAM 34).